A 182-amino-acid chain; its full sequence is Large ribosomal subunit protein uL5 (182 aa).

This sequence belongs to the universal ribosomal protein uL5 family. In terms of assembly, part of the 50S ribosomal subunit; part of the 5S rRNA/L5/L18/L25 subcomplex. Contacts the 5S rRNA and the P site tRNA. Forms a bridge to the 30S subunit in the 70S ribosome.

Its function is as follows. This is one of the proteins that bind and probably mediate the attachment of the 5S RNA into the large ribosomal subunit, where it forms part of the central protuberance. In the 70S ribosome it contacts protein S13 of the 30S subunit (bridge B1b), connecting the 2 subunits; this bridge is implicated in subunit movement. Contacts the P site tRNA; the 5S rRNA and some of its associated proteins might help stabilize positioning of ribosome-bound tRNAs. This is Large ribosomal subunit protein uL5 from Thermus thermophilus (strain ATCC BAA-163 / DSM 7039 / HB27).